A 798-amino-acid polypeptide reads, in one-letter code: Phenylalanine--tRNA ligase beta subunit (798 aa).

Residues 39 to 148 (NPIFDGFLVG…EDIPIGKKIN (110 aa)) form the tRNA-binding domain. Residues 402–477 (SCSNKIKLYH…RIYNYNNIPL (76 aa)) form the B5 domain. Mg(2+) contacts are provided by Asp455, Asp461, and Asp465. Positions 704–797 (SKYPTSRRDI…LKKKFQVVLR (94 aa)) constitute an FDX-ACB domain.

The protein belongs to the phenylalanyl-tRNA synthetase beta subunit family. Type 1 subfamily. In terms of assembly, tetramer of two alpha and two beta subunits. Mg(2+) is required as a cofactor.

The protein resides in the cytoplasm. It carries out the reaction tRNA(Phe) + L-phenylalanine + ATP = L-phenylalanyl-tRNA(Phe) + AMP + diphosphate + H(+). The sequence is that of Phenylalanine--tRNA ligase beta subunit (pheT) from Buchnera aphidicola subsp. Schizaphis graminum (strain Sg).